The sequence spans 138 residues: Mu-like prophage FluMu G protein 2 (138 aa).

This sequence to phage Mu protein G.

The sequence is that of Mu-like prophage FluMu G protein 2 from Haemophilus influenzae (strain ATCC 51907 / DSM 11121 / KW20 / Rd).